A 448-amino-acid polypeptide reads, in one-letter code: Potassium/proton antiporter CemA (448 aa).

Helical transmembrane passes span 47–67 (IVFYTNTGLNNCIFKIYLSLL), 213–233 (LSSLQYIGCLISIPSIISTLF), 314–334 (IISHSLTDIIYLITLSGLFVA), and 395–415 (IISCSVSTFPVVLDTVLKYLI).

Belongs to the CemA family.

It localises to the plastid membrane. The enzyme catalyses K(+)(in) + H(+)(out) = K(+)(out) + H(+)(in). Functionally, may be involved in proton extrusion. This chain is Potassium/proton antiporter CemA, found in Aneura mirabilis (Parasitic liverwort).